Reading from the N-terminus, the 467-residue chain is ATP-dependent protease ATPase subunit HslU (467 aa).

ATP-binding positions include valine 22 and 64 to 69 (GVGKTE). The segment at 149 to 192 (QTNNPLESLFGGAIPNFGQNNEDEEEPPTEEIKTKRSEIKRQLE) is disordered. Residues 178–192 (EEIKTKRSEIKRQLE) show a composition bias toward basic and acidic residues. Residues aspartate 280, glutamate 345, and arginine 417 each coordinate ATP.

Belongs to the ClpX chaperone family. HslU subfamily. In terms of assembly, a double ring-shaped homohexamer of HslV is capped on each side by a ring-shaped HslU homohexamer. The assembly of the HslU/HslV complex is dependent on binding of ATP.

It is found in the cytoplasm. ATPase subunit of a proteasome-like degradation complex; this subunit has chaperone activity. The binding of ATP and its subsequent hydrolysis by HslU are essential for unfolding of protein substrates subsequently hydrolyzed by HslV. HslU recognizes the N-terminal part of its protein substrates and unfolds these before they are guided to HslV for hydrolysis. The protein is ATP-dependent protease ATPase subunit HslU of Staphylococcus aureus (strain MRSA252).